Here is a 289-residue protein sequence, read N- to C-terminus: DNA repair protein rad14 (289 aa).

Zn(2+) contacts are provided by C116, C119, C137, and C140. The segment at 116–140 (CFECDSIELDTKYFDIFHCRVCHTC) is a zinc-finger region.

Belongs to the XPA family. As to quaternary structure, interacts with hrq1.

Its subcellular location is the nucleus. Functionally, involved in nucleotide excision repair (NER). Functional in repair of ultraviolet radiation induced damages and in mitotic mutation avoidance. Binds damaged DNA. Binds specifically to base-base mismatches or small insertion/deletion loops with unpaired nucleotides. Maintains GT repeat stability. Functions as a part of the short-patch excision repair system. This chain is DNA repair protein rad14, found in Schizosaccharomyces pombe (strain 972 / ATCC 24843) (Fission yeast).